The chain runs to 380 residues: Cytochrome b (380 aa).

A run of 4 helical transmembrane segments spans residues 34–54 (FGSL…FLAM), 78–99 (WLLR…YCHI), 114–134 (WNVG…GYVL), and 179–199 (FFAF…IDLV). Heme b is bound by residues H84 and H98. H183 serves as a coordination point for heme b. H202 contacts a ubiquinone. 4 helical membrane passes run 227 to 247 (TKDT…ALLF), 289 to 309 (LGGV…PLLN), 321 to 341 (LSQA…WIGS), and 348 to 369 (FVLI…GFPL).

This sequence belongs to the cytochrome b family. The main subunits of complex b-c1 are: cytochrome b, cytochrome c1 and the Rieske protein. Heme b is required as a cofactor.

Its subcellular location is the mitochondrion inner membrane. Functionally, component of the ubiquinol-cytochrome c reductase complex (complex III or cytochrome b-c1 complex) that is part of the mitochondrial respiratory chain. The b-c1 complex mediates electron transfer from ubiquinol to cytochrome c. Contributes to the generation of a proton gradient across the mitochondrial membrane that is then used for ATP synthesis. The protein is Cytochrome b (MT-CYB) of Paracentrotus lividus (Common sea urchin).